Here is a 115-residue protein sequence, read N- to C-terminus: Androgen-binding protein homolog (115 aa).

Positions 1-23 (MKGTLLLLALLVTGELGFQTTEA) are cleaved as a signal peptide.

The protein belongs to the secretoglobin family.

It is found in the secreted. The sequence is that of Androgen-binding protein homolog from Mesocricetus auratus (Golden hamster).